We begin with the raw amino-acid sequence, 327 residues long: GTP 3',8-cyclase (327 aa).

The Radical SAM core domain maps to 21 to 233 (SYGRRIRKLR…AKIQQKYSLK (213 aa)). Residue R30 participates in GTP binding. C37 and C41 together coordinate [4Fe-4S] cluster. Y43 is an S-adenosyl-L-methionine binding site. A [4Fe-4S] cluster-binding site is contributed by C44. GTP is bound at residue R79. G83 contacts S-adenosyl-L-methionine. T109 contributes to the GTP binding site. S133 contributes to the S-adenosyl-L-methionine binding site. GTP is bound at residue K169. M203 provides a ligand contact to S-adenosyl-L-methionine. [4Fe-4S] cluster-binding residues include C265 and C268. 270–272 (RWR) is a GTP binding site. C282 provides a ligand contact to [4Fe-4S] cluster.

It belongs to the radical SAM superfamily. MoaA family. Monomer and homodimer. The cofactor is [4Fe-4S] cluster.

It carries out the reaction GTP + AH2 + S-adenosyl-L-methionine = (8S)-3',8-cyclo-7,8-dihydroguanosine 5'-triphosphate + 5'-deoxyadenosine + L-methionine + A + H(+). The protein operates within cofactor biosynthesis; molybdopterin biosynthesis. In terms of biological role, catalyzes the cyclization of GTP to (8S)-3',8-cyclo-7,8-dihydroguanosine 5'-triphosphate. The sequence is that of GTP 3',8-cyclase from Synechocystis sp. (strain ATCC 27184 / PCC 6803 / Kazusa).